We begin with the raw amino-acid sequence, 340 residues long: DNA-directed RNA polymerase subunit alpha (340 aa).

An alpha N-terminal domain (alpha-NTD) region spans residues 1–236 (MLSLSKNWNT…EQLQLFISFE (236 aa)). The tract at residues 246-340 (TDALPFSPYL…LSNRYEDSYN (95 aa)) is alpha C-terminal domain (alpha-CTD).

The protein belongs to the RNA polymerase alpha chain family. As to quaternary structure, homodimer. The RNAP catalytic core consists of 2 alpha, 1 beta, 1 beta' and 1 omega subunit. When a sigma factor is associated with the core the holoenzyme is formed, which can initiate transcription.

The catalysed reaction is RNA(n) + a ribonucleoside 5'-triphosphate = RNA(n+1) + diphosphate. Functionally, DNA-dependent RNA polymerase catalyzes the transcription of DNA into RNA using the four ribonucleoside triphosphates as substrates. The sequence is that of DNA-directed RNA polymerase subunit alpha from Rickettsia felis (strain ATCC VR-1525 / URRWXCal2) (Rickettsia azadi).